Consider the following 209-residue polypeptide: uncharacterized protein (209 aa).

The next 3 helical transmembrane spans lie at 26–48, 147–169, and 179–196; these read LRYF…GLAV, AYLV…PFLM, and IVAA…VYLL.

It is found in the cell membrane. This is an uncharacterized protein from Archaeoglobus fulgidus (strain ATCC 49558 / DSM 4304 / JCM 9628 / NBRC 100126 / VC-16).